The chain runs to 826 residues: E3 ubiquitin ligase PARAQUAT TOLERANCE 3 (826 aa).

The region spanning 3–76 is the DWNN domain; sequence IYYKFKSARD…NTSVLIRRVP (74 aa). A CCHC-type zinc finger spans residues 203-216; the sequence is CHRCNVSGHFIQHC. Position 278 is a phosphoserine (serine 278). Residues 288 to 326 form an RING-type; degenerate zinc finger; sequence CPLCKEVMRDAALASKCCLKSYCDKCIRDHIIAKSMCVC. 3 stretches are compositionally biased toward polar residues: residues 356–365, 396–406, and 435–454; these read SAENAGSMCQ, PSNNNETSTLK, and NIQG…NTQP. 3 disordered regions span residues 356-406, 435-488, and 585-826; these read SAEN…STLK, NIQG…GPDY, and HPIM…RARA. Serine 397 carries the post-translational modification Phosphoserine. Residues 588 to 624 show a composition bias toward basic and acidic residues; that stretch reads MGREEFEAKKTEMKRKRENEIRRSEGGNVVRDSEKSR. Residues 625 to 635 show a composition bias toward polar residues; the sequence is IMNNSAVTSSP. Over residues 651 to 667 the composition is skewed to basic and acidic residues; the sequence is DYDRRRRSDRSSPERQS. 2 consecutive short sequence motifs (nuclear localization signal) follow at residues 668 to 675 and 695 to 702; these read SRRFTSPP and DRRRDRPR. Over residues 680 to 706 the composition is skewed to basic and acidic residues; the sequence is RKSERDRHHDLDSEHDRRRDRPRETDR. Positions 790–799 are enriched in basic residues; the sequence is FKRKPSRYKR. Serine 800 is subject to Phosphoserine. A compositionally biased stretch (basic and acidic residues) spans 809–826; the sequence is GDEHFRHSKRSKGERARA.

In terms of assembly, interacts with PRMT13/PRMT4B in the nucleus. As to expression, expressed constitutively in both shoot and root tissues.

Its subcellular location is the nucleus. It carries out the reaction S-ubiquitinyl-[E2 ubiquitin-conjugating enzyme]-L-cysteine + [acceptor protein]-L-lysine = [E2 ubiquitin-conjugating enzyme]-L-cysteine + N(6)-ubiquitinyl-[acceptor protein]-L-lysine.. Functionally, E3 ubiquitin ligase acting as a negative regulator of oxidative stress tolerance, probably by mediating 26S proteasome-mediated degradation of PRMT13/PRMT4B, thus preventing APX1 and GPX1 accumulation via the reduction of histone H3 methylation (H3R17me2a). Confers sensitivity to cadmium CdCl(2) and salt NaCl stresses. This chain is E3 ubiquitin ligase PARAQUAT TOLERANCE 3, found in Arabidopsis thaliana (Mouse-ear cress).